The primary structure comprises 140 residues: Large ribosomal subunit protein uL13 (140 aa).

It belongs to the universal ribosomal protein uL13 family. In terms of assembly, part of the 50S ribosomal subunit.

This protein is one of the early assembly proteins of the 50S ribosomal subunit, although it is not seen to bind rRNA by itself. It is important during the early stages of 50S assembly. The chain is Large ribosomal subunit protein uL13 from Sulfurimonas denitrificans (strain ATCC 33889 / DSM 1251) (Thiomicrospira denitrificans (strain ATCC 33889 / DSM 1251)).